Consider the following 363-residue polypeptide: AA9 family lytic polysaccharide monooxygenase I (363 aa).

The signal sequence occupies residues 1–19 (MSLFKFAAFVLGTAGSVAG). The Cu(2+) site is built by H20 and H105. Intrachain disulfides connect C75/C197 and C116/C120. O2-binding residues include H183 and Q192. Y194 lines the Cu(2+) pocket. Polar residues predominate over residues 248–257 (GSDSNTATSG). Disordered stretches follow at residues 248–270 (GSDSNTATSGASPPSTNFSPTTT) and 298–363 (SVSY…RTQS). Positions 258–270 (ASPPSTNFSPTTT) are enriched in low complexity. Positions 298–307 (SVSYSQTPWP) are enriched in polar residues. The segment covering 308–329 (SSTATEATSASSSAGGSNNGHT) has biased composition (low complexity). The segment covering 342-354 (TGKKRSRLNRRRM) has biased composition (basic residues).

This sequence belongs to the polysaccharide monooxygenase AA9 family. Cu(2+) serves as cofactor.

It is found in the secreted. The catalysed reaction is [(1-&gt;4)-beta-D-glucosyl]n+m + reduced acceptor + O2 = 4-dehydro-beta-D-glucosyl-[(1-&gt;4)-beta-D-glucosyl]n-1 + [(1-&gt;4)-beta-D-glucosyl]m + acceptor + H2O.. Its function is as follows. Lytic polysaccharide monooxygenase (LPMO) that depolymerizes crystalline and amorphous polysaccharides via the oxidation of scissile alpha- or beta-(1-4)-glycosidic bonds, yielding C1 or C4 oxidation products. Catalysis by LPMOs requires the reduction of the active-site copper from Cu(II) to Cu(I) by a reducing agent and H(2)O(2) or O(2) as a cosubstrate. The sequence is that of AA9 family lytic polysaccharide monooxygenase I from Emericella nidulans (strain FGSC A4 / ATCC 38163 / CBS 112.46 / NRRL 194 / M139) (Aspergillus nidulans).